Here is a 311-residue protein sequence, read N- to C-terminus: Methionyl-tRNA formyltransferase (311 aa).

110-113 contributes to the (6S)-5,6,7,8-tetrahydrofolate binding site; that stretch reads SLLP.

Belongs to the Fmt family.

The enzyme catalyses L-methionyl-tRNA(fMet) + (6R)-10-formyltetrahydrofolate = N-formyl-L-methionyl-tRNA(fMet) + (6S)-5,6,7,8-tetrahydrofolate + H(+). Functionally, attaches a formyl group to the free amino group of methionyl-tRNA(fMet). The formyl group appears to play a dual role in the initiator identity of N-formylmethionyl-tRNA by promoting its recognition by IF2 and preventing the misappropriation of this tRNA by the elongation apparatus. In Acidobacterium capsulatum (strain ATCC 51196 / DSM 11244 / BCRC 80197 / JCM 7670 / NBRC 15755 / NCIMB 13165 / 161), this protein is Methionyl-tRNA formyltransferase.